The chain runs to 668 residues: Alpha-1,4-glucan:maltose-1-phosphate maltosyltransferase (668 aa).

Residues 263–288 form a disordered region; that stretch reads RKGRNNSLTPAPDDPGSPYAIGSEEG. Residues Lys264, Gln324, and Asp359 each contribute to the alpha-maltose 1-phosphate site. The active-site Nucleophile is the Asp395. Residue Asn396 participates in alpha-maltose 1-phosphate binding. Glu424 acts as the Proton donor in catalysis. 535-536 lines the alpha-maltose 1-phosphate pocket; sequence KY.

The protein belongs to the glycosyl hydrolase 13 family. GlgE subfamily. In terms of assembly, homodimer.

The enzyme catalyses alpha-maltose 1-phosphate + [(1-&gt;4)-alpha-D-glucosyl](n) = [(1-&gt;4)-alpha-D-glucosyl](n+2) + phosphate. In terms of biological role, maltosyltransferase that uses maltose 1-phosphate (M1P) as the sugar donor to elongate linear or branched alpha-(1-&gt;4)-glucans. Is involved in a branched alpha-glucan biosynthetic pathway from trehalose, together with TreS, Mak and GlgB. This is Alpha-1,4-glucan:maltose-1-phosphate maltosyltransferase from Cereibacter sphaeroides (strain ATCC 17023 / DSM 158 / JCM 6121 / CCUG 31486 / LMG 2827 / NBRC 12203 / NCIMB 8253 / ATH 2.4.1.) (Rhodobacter sphaeroides).